The following is a 65-amino-acid chain: Large ribosomal subunit protein bL35 (65 aa).

Composition is skewed to basic residues over residues 1-18 (MPKMKTKSAAAKRFKRTA), 31-44 (HRFHGKTKKQRRQL), and 55-65 (VKRYKKMIPAK). Residues 1-65 (MPKMKTKSAA…KRYKKMIPAK (65 aa)) are disordered.

The protein belongs to the bacterial ribosomal protein bL35 family.

This Limosilactobacillus fermentum (strain NBRC 3956 / LMG 18251) (Lactobacillus fermentum) protein is Large ribosomal subunit protein bL35.